Reading from the N-terminus, the 320-residue chain is Cytochrome f (320 aa).

Residues 1–35 (MENRKTFSWLKEQMIRSISVSIMIYVITRTSISNA) form the signal peptide. Heme-binding residues include Y36, C56, C59, and H60. The helical transmembrane segment at 286–305 (VQGLLFFFASVILAQVFLVL) threads the bilayer.

The protein belongs to the cytochrome f family. The 4 large subunits of the cytochrome b6-f complex are cytochrome b6, subunit IV (17 kDa polypeptide, petD), cytochrome f and the Rieske protein, while the 4 small subunits are PetG, PetL, PetM and PetN. The complex functions as a dimer. The cofactor is heme.

The protein resides in the plastid. It is found in the chloroplast thylakoid membrane. In terms of biological role, component of the cytochrome b6-f complex, which mediates electron transfer between photosystem II (PSII) and photosystem I (PSI), cyclic electron flow around PSI, and state transitions. This Zea mays (Maize) protein is Cytochrome f (petA).